A 413-amino-acid polypeptide reads, in one-letter code: Putative F-box/kelch-repeat protein At3g22870 (413 aa).

The region spanning Thr2–Met53 is the F-box domain. 2 Kelch repeats span residues Leu156–Ser202 and Lys331–Gln379.

The chain is Putative F-box/kelch-repeat protein At3g22870 from Arabidopsis thaliana (Mouse-ear cress).